Here is a 267-residue protein sequence, read N- to C-terminus: Malonyl-[acyl-carrier protein] O-methyltransferase (267 aa).

The protein belongs to the methyltransferase superfamily.

The catalysed reaction is malonyl-[ACP] + S-adenosyl-L-methionine = malonyl-[ACP] methyl ester + S-adenosyl-L-homocysteine. It functions in the pathway cofactor biosynthesis; biotin biosynthesis. Functionally, converts the free carboxyl group of a malonyl-thioester to its methyl ester by transfer of a methyl group from S-adenosyl-L-methionine (SAM). It allows to synthesize pimeloyl-ACP via the fatty acid synthetic pathway. The chain is Malonyl-[acyl-carrier protein] O-methyltransferase from Yersinia pestis.